A 686-amino-acid polypeptide reads, in one-letter code: Protein-glutamine gamma-glutamyltransferase 2 (686 aa).

At alanine 2 the chain carries N-acetylalanine. 2 disulfides stabilise this stretch: cysteine 230-cysteine 370 and cysteine 370-cysteine 371. Catalysis depends on residues cysteine 277, histidine 335, and aspartate 358. Ca(2+) is bound by residues asparagine 398, aspartate 400, glutamate 437, glutamate 447, and glutamate 452. At lysine 468 the chain carries N6-acetyllysine. Residue 476-483 (RIRVGDSM) participates in GTP binding. Glutamate 538 is a Ca(2+) binding site. Residue 579–582 (RDLY) coordinates GTP. Glutamine 632 participates in a covalent cross-link: Isoglutamyl lysine isopeptide (Gln-Lys) (interchain with K-?).

Belongs to the transglutaminase superfamily. Transglutaminase family. As to quaternary structure, monomer. Interacts with phospholipase C; promoting alpha-1 adrenergic receptor signaling. Interacts with PLCD1. The cofactor is Ca(2+). Post-translationally, disulfide bond formation inactivates the calcium-dependent acyltransferase activity. Cys-370 can form disulfide bonds with both Cys-230 and Cys-371: formation of a disulfide bond between Cys-230 and Cys-370 facilitates formation of the disulfide between Cys-370 and Cys-371, which promotes inactivation of the acyltransferase activity. May also form interchain disulfids between Cys-230 and Cys-370. Ca(2+) protects against disulfide bond formation and inactivation. Auto-transglutaminated: Forms covalent cross-links mediated by transglutaminase between Gln-632 and the epsilon-amino group of a lysine residue of itself or HMGB1, forming homopolymers and heteropolymers, respectively. In terms of processing, S-nitrosylated, leading to inactivation of the acyltransferase activity.

Its subcellular location is the cytoplasm. It is found in the cytosol. It localises to the nucleus. The protein localises to the chromosome. The protein resides in the secreted. Its subcellular location is the extracellular space. It is found in the extracellular matrix. It localises to the cell membrane. The protein localises to the mitochondrion. It carries out the reaction L-glutaminyl-[protein] + L-lysyl-[protein] = [protein]-L-lysyl-N(6)-5-L-glutamyl-[protein] + NH4(+). The catalysed reaction is L-glutaminyl-[protein] + serotonin = 5-serotonyl-L-glutamyl-[protein] + NH4(+). It catalyses the reaction L-glutaminyl-[protein] + dopamine = 5-dopaminyl-L-glutamyl-[protein] + NH4(+). The enzyme catalyses L-glutaminyl-[protein] + histamine = 5-histaminyl-L-glutamyl-[protein] + NH4(+). It carries out the reaction L-glutaminyl-[protein] + (R)-noradrenaline = 5-(R)-noradrenalinyl-L-glutamyl-[protein] + NH4(+). The catalysed reaction is L-glutaminyl-[protein] + H2O = L-glutamyl-[protein] + NH4(+). With respect to regulation, acyltransferase activity is regulated by the binding of GTP and Ca(2+): inactivated by GTP, which stabilizes its closed structure, thereby obstructing the accessibility of substrates to the active sites. In contrast, Ca(2+) acts as a cofactor by inducing conformational change to the active open form. In absence of Ca(2+), Mg(2+) may bind Ca(2+)-binding sites, promoting GTP-binding and subsequent inhibition of the acyltransferase activity. Extracellularly reduced and activated by CLIC3. Its function is as follows. Calcium-dependent acyltransferase that catalyzes the formation of covalent bonds between peptide-bound glutamine and various primary amines, such as gamma-amino group of peptide-bound lysine, or mono- and polyamines, thereby producing cross-linked or aminated proteins, respectively. Involved in many biological processes, such as bone development, angiogenesis, wound healing, cellular differentiation, chromatin modification and apoptosis. Acts as a protein-glutamine gamma-glutamyltransferase by mediating the cross-linking of proteins, such as ACO2, HSPB6, FN1, HMGB1, RAP1GDS1, SLC25A4/ANT1, SPP1 and WDR54. Under physiological conditions, the protein cross-linking activity is inhibited by GTP; inhibition is relieved by Ca(2+) in response to various stresses. When secreted, catalyzes cross-linking of proteins of the extracellular matrix, such as FN1 and SPP1 resulting in the formation of scaffolds. Plays a key role during apoptosis, both by (1) promoting the cross-linking of cytoskeletal proteins resulting in condensation of the cytoplasm, and by (2) mediating cross-linking proteins of the extracellular matrix, resulting in the irreversible formation of scaffolds that stabilize the integrity of the dying cells before their clearance by phagocytosis, thereby preventing the leakage of harmful intracellular components. In addition to protein cross-linking, can use different monoamine substrates to catalyze a vast array of protein post-translational modifications: mediates aminylation of serotonin, dopamine, noradrenaline or histamine into glutamine residues of target proteins to generate protein serotonylation, dopaminylation, noradrenalinylation or histaminylation, respectively. Mediates protein serotonylation of small GTPases during activation and aggregation of platelets, leading to constitutive activation of these GTPases. Plays a key role in chromatin organization by mediating serotonylation and dopaminylation of histone H3. Catalyzes serotonylation of 'Gln-5' of histone H3 (H3Q5ser) during serotonergic neuron differentiation, thereby facilitating transcription. Acts as a mediator of neurotransmission-independent role of nuclear dopamine in ventral tegmental area (VTA) neurons: catalyzes dopaminylation of 'Gln-5' of histone H3 (H3Q5dop), thereby regulating relapse-related transcriptional plasticity in the reward system. Regulates vein remodeling by mediating serotonylation and subsequent inactivation of ATP2A2/SERCA2. Also acts as a protein deamidase by mediating the side chain deamidation of specific glutamine residues of proteins to glutamate. Catalyzes specific deamidation of protein gliadin, a component of wheat gluten in the diet. May also act as an isopeptidase cleaving the previously formed cross-links. Also able to participate in signaling pathways independently of its acyltransferase activity: acts as a signal transducer in alpha-1 adrenergic receptor-mediated stimulation of phospholipase C-delta (PLCD) activity and is required for coupling alpha-1 adrenergic agonists to the stimulation of phosphoinositide lipid metabolism. The polypeptide is Protein-glutamine gamma-glutamyltransferase 2 (Mus musculus (Mouse)).